The chain runs to 615 residues: Proteasome-associated ATPase (615 aa).

Positions 1–36 (MSESERPEAGDGTDALGASPDTPLSSEDAAELEQLR) are disordered. Residues 25-102 (SSEDAAELEQ…LREEVDRLGQ (78 aa)) are a coiled coil. Position 302-307 (302-307 (GCGKTL)) interacts with ATP. The tract at residues 614–615 (YL) is docks into pockets in the proteasome alpha-ring.

This sequence belongs to the AAA ATPase family. In terms of assembly, homohexamer. Assembles into a hexameric ring structure that caps the 20S proteasome core. Strongly interacts with the prokaryotic ubiquitin-like protein Pup through a hydrophobic interface; the interacting region of ARC lies in its N-terminal coiled-coil domain. There is one Pup binding site per ARC hexamer ring. Upon ATP-binding, the C-terminus of ARC interacts with the alpha-rings of the proteasome core, possibly by binding to the intersubunit pockets.

It functions in the pathway protein degradation; proteasomal Pup-dependent pathway. Its function is as follows. ATPase which is responsible for recognizing, binding, unfolding and translocation of pupylated proteins into the bacterial 20S proteasome core particle. May be essential for opening the gate of the 20S proteasome via an interaction with its C-terminus, thereby allowing substrate entry and access to the site of proteolysis. Thus, the C-termini of the proteasomal ATPase may function like a 'key in a lock' to induce gate opening and therefore regulate proteolysis. The polypeptide is Proteasome-associated ATPase (Mycolicibacterium gilvum (strain PYR-GCK) (Mycobacterium gilvum (strain PYR-GCK))).